A 260-amino-acid chain; its full sequence is Large ribosomal subunit protein uL4 (260 aa).

Belongs to the universal ribosomal protein uL4 family. Part of the 50S ribosomal subunit.

Functionally, one of the primary rRNA binding proteins, this protein initially binds near the 5'-end of the 23S rRNA. It is important during the early stages of 50S assembly. It makes multiple contacts with different domains of the 23S rRNA in the assembled 50S subunit and ribosome. In terms of biological role, forms part of the polypeptide exit tunnel. The protein is Large ribosomal subunit protein uL4 of Methanopyrus kandleri (strain AV19 / DSM 6324 / JCM 9639 / NBRC 100938).